We begin with the raw amino-acid sequence, 175 residues long: Diacylglycerol kinase (175 aa).

2 consecutive transmembrane segments (helical) span residues 55-75 (VAPN…YAFA) and 96-116 (LLHL…LVMI). Glutamate 118 serves as the catalytic Proton acceptor. Glutamate 125 lines the a divalent metal cation pocket. The chain crosses the membrane as a helical span at residues 151-171 (VLLAAIAAVIVGGCLLLPPLL).

The protein belongs to the bacterial diacylglycerol kinase family. Mg(2+) serves as cofactor.

The protein resides in the cell membrane. The enzyme catalyses a 1,2-diacyl-sn-glycerol + ATP = a 1,2-diacyl-sn-glycero-3-phosphate + ADP + H(+). Catalyzes the ATP-dependent phosphorylation of sn-l,2-diacylglycerol (DAG) to phosphatidic acid. The sequence is that of Diacylglycerol kinase (dgkA) from Synechocystis sp. (strain ATCC 27184 / PCC 6803 / Kazusa).